We begin with the raw amino-acid sequence, 174 residues long: Small ribosomal subunit protein uS5 (174 aa).

The S5 DRBM domain maps to 19 to 82 (LREKMIAINR…EEARRNMTKI (64 aa)).

Belongs to the universal ribosomal protein uS5 family. In terms of assembly, part of the 30S ribosomal subunit. Contacts proteins S4 and S8.

Its function is as follows. With S4 and S12 plays an important role in translational accuracy. In terms of biological role, located at the back of the 30S subunit body where it stabilizes the conformation of the head with respect to the body. In Albidiferax ferrireducens (strain ATCC BAA-621 / DSM 15236 / T118) (Rhodoferax ferrireducens), this protein is Small ribosomal subunit protein uS5.